The primary structure comprises 634 residues: DNA-directed RNA polymerase subunit gamma (634 aa).

Positions 74, 76, 89, and 92 each coordinate Zn(2+). Residues Asp471, Asp473, and Asp475 each coordinate Mg(2+).

The protein belongs to the RNA polymerase beta' chain family. RpoC1 subfamily. In cyanobacteria the RNAP catalytic core is composed of 2 alpha, 1 beta, 1 beta', 1 gamma and 1 omega subunit. When a sigma factor is associated with the core the holoenzyme is formed, which can initiate transcription. The cofactor is Mg(2+). It depends on Zn(2+) as a cofactor.

It catalyses the reaction RNA(n) + a ribonucleoside 5'-triphosphate = RNA(n+1) + diphosphate. DNA-dependent RNA polymerase catalyzes the transcription of DNA into RNA using the four ribonucleoside triphosphates as substrates. This is DNA-directed RNA polymerase subunit gamma from Prochlorococcus marinus (strain MIT 9303).